The chain runs to 126 residues: Histone H2B type 2-B (126 aa).

Residues 1 to 12 are compositionally biased toward low complexity; sequence MPDPAKSAPAPK. A disordered region spans residues 1 to 36; sequence MPDPAKSAPAPKKGSKKAVTKVQKKDGKKRKRSRKE. The residue at position 2 (Pro-2) is an N-acetylproline. Residue Lys-6 is modified to N6-(2-hydroxyisobutyryl)lysine; alternate. N6-(beta-hydroxybutyryl)lysine; alternate is present on Lys-6. Lys-6 carries the post-translational modification N6-acetyllysine; alternate. Lys-6 is subject to N6-butyryllysine; alternate. Position 6 is an N6-crotonyllysine; alternate (Lys-6). Lys-6 carries the post-translational modification N6-lactoyllysine; alternate. Residue Lys-6 forms a Glycyl lysine isopeptide (Lys-Gly) (interchain with G-Cter in SUMO2); alternate linkage. Residue Ser-7 is modified to ADP-ribosylserine. The residue at position 12 (Lys-12) is an N6-(beta-hydroxybutyryl)lysine; alternate. N6-acetyllysine; alternate occurs at positions 12 and 13. N6-crotonyllysine; alternate occurs at positions 12 and 13. At Lys-12 the chain carries N6-lactoyllysine; alternate. Lys-13 is modified (N6-(2-hydroxyisobutyryl)lysine; alternate). Ser-15 is subject to Phosphoserine; by STK4/MST1. An N6-acetyllysine; alternate mark is found at Lys-16, Lys-17, Lys-21, and Lys-24. An N6-crotonyllysine; alternate mark is found at Lys-16, Lys-17, Lys-21, and Lys-24. 4 positions are modified to N6-lactoyllysine; alternate: Lys-16, Lys-17, Lys-21, and Lys-24. At Lys-17 the chain carries N6-glutaryllysine; alternate. Residues Lys-21 and Lys-24 each carry the N6-(2-hydroxyisobutyryl)lysine; alternate modification. An N6-(beta-hydroxybutyryl)lysine; alternate modification is found at Lys-21. Residue Lys-21 is modified to N6-butyryllysine; alternate. Lys-21 is covalently cross-linked (Glycyl lysine isopeptide (Lys-Gly) (interchain with G-Cter in SUMO2); alternate). Lys-25 carries the N6-(2-hydroxyisobutyryl)lysine modification. The residue at position 35 (Lys-35) is an N6-(2-hydroxyisobutyryl)lysine; alternate. Lys-35 carries the post-translational modification N6-(beta-hydroxybutyryl)lysine; alternate. Residue Lys-35 is modified to N6-crotonyllysine; alternate. Lys-35 carries the N6-glutaryllysine; alternate modification. An N6-succinyllysine; alternate modification is found at Lys-35. Residue Lys-35 forms a Glycyl lysine isopeptide (Lys-Gly) (interchain with G-Cter in ubiquitin); alternate linkage. Glu-36 carries the post-translational modification PolyADP-ribosyl glutamic acid. At Ser-37 the chain carries Phosphoserine; by AMPK. Residues Lys-44, Lys-47, and Lys-58 each carry the N6-(2-hydroxyisobutyryl)lysine; alternate modification. Lys-44 bears the N6-lactoyllysine; alternate mark. An N6-glutaryllysine; alternate mark is found at Lys-44 and Lys-47. At Lys-47 the chain carries N6-methyllysine; alternate. The residue at position 58 (Lys-58) is an N6,N6-dimethyllysine; alternate. Arg-80 bears the Dimethylated arginine mark. Lys-86 carries the N6-(2-hydroxyisobutyryl)lysine; alternate modification. Lys-86 carries the N6-acetyllysine; alternate modification. Lys-86 is modified (N6-lactoyllysine; alternate). Position 86 is an N6,N6,N6-trimethyllysine; alternate (Lys-86). Arg-87 and Arg-93 each carry omega-N-methylarginine. Lys-109 carries the post-translational modification N6-(2-hydroxyisobutyryl)lysine; alternate. Lys-109 is subject to N6-(beta-hydroxybutyryl)lysine; alternate. Lys-109 bears the N6-lactoyllysine; alternate mark. Lys-109 is modified (N6-glutaryllysine; alternate). Residue Lys-109 is modified to N6-methyllysine; alternate. Ser-113 is a glycosylation site (O-linked (GlcNAc) serine). The residue at position 116 (Thr-116) is a Phosphothreonine. N6-(2-hydroxyisobutyryl)lysine; alternate is present on residues Lys-117 and Lys-121. N6-(beta-hydroxybutyryl)lysine; alternate is present on Lys-117. Lys-117 and Lys-121 each carry N6-lactoyllysine; alternate. N6-glutaryllysine; alternate occurs at positions 117 and 121. 2 positions are modified to N6-succinyllysine; alternate: Lys-117 and Lys-121. Lys-117 is modified (N6-methylated lysine; alternate). Residue Lys-121 forms a Glycyl lysine isopeptide (Lys-Gly) (interchain with G-Cter in ubiquitin); alternate linkage.

The protein belongs to the histone H2B family. As to quaternary structure, the nucleosome is a histone octamer containing two molecules each of H2A, H2B, H3 and H4 assembled in one H3-H4 heterotetramer and two H2A-H2B heterodimers. The octamer wraps approximately 147 bp of DNA. Post-translationally, monoubiquitination at Lys-35 (H2BK34Ub) by the MSL1/MSL2 dimer is required for histone H3 'Lys-4' (H3K4me) and 'Lys-79' (H3K79me) methylation and transcription activation at specific gene loci, such as HOXA9 and MEIS1 loci. Similarly, monoubiquitination at Lys-121 (H2BK120Ub) by the RNF20/40 complex gives a specific tag for epigenetic transcriptional activation and is also prerequisite for histone H3 'Lys-4' and 'Lys-79' methylation. It also functions cooperatively with the FACT dimer to stimulate elongation by RNA polymerase II. H2BK120Ub also acts as a regulator of mRNA splicing: deubiquitination by USP49 is required for efficient cotranscriptional splicing of a large set of exons. In terms of processing, phosphorylated on Ser-15 (H2BS14ph) by STK4/MST1 during apoptosis; which facilitates apoptotic chromatin condensation. Also phosphorylated on Ser-15 in response to DNA double strand breaks (DSBs), and in correlation with somatic hypermutation and immunoglobulin class-switch recombination. Phosphorylation at Ser-37 (H2BS36ph) by AMPK in response to stress promotes transcription. GlcNAcylation at Ser-113 promotes monoubiquitination of Lys-121. It fluctuates in response to extracellular glucose, and associates with transcribed genes. Post-translationally, ADP-ribosylated by PARP1 or PARP2 on Ser-7 (H2BS6ADPr) in response to DNA damage. H2BS6ADPr promotes recruitment of CHD1L. Poly ADP-ribosylation on Glu-36 (H2BE35ADPr) by PARP1 regulates adipogenesis: it inhibits phosphorylation at Ser-37 (H2BS36ph), thereby blocking expression of pro-adipogenetic genes. In terms of processing, crotonylation (Kcr) is specifically present in male germ cells and marks testis-specific genes in post-meiotic cells, including X-linked genes that escape sex chromosome inactivation in haploid cells. Crotonylation marks active promoters and enhancers and confers resistance to transcriptional repressors. It is also associated with post-meiotically activated genes on autosomes. Hydroxybutyrylation of histones is induced by starvation. Post-translationally, lactylated in macrophages by EP300/P300 by using lactoyl-CoA directly derived from endogenous or exogenous lactate, leading to stimulates gene transcription.

It is found in the nucleus. The protein resides in the chromosome. Core component of nucleosome. Nucleosomes wrap and compact DNA into chromatin, limiting DNA accessibility to the cellular machineries which require DNA as a template. Histones thereby play a central role in transcription regulation, DNA repair, DNA replication and chromosomal stability. DNA accessibility is regulated via a complex set of post-translational modifications of histones, also called histone code, and nucleosome remodeling. The chain is Histone H2B type 2-B from Mus musculus (Mouse).